An 810-amino-acid polypeptide reads, in one-letter code: LPS-assembly protein LptD (810 aa).

Positions 1–29 (MTKWTLGYSYPIALTISLIPALTPAIVQA) are cleaved as a signal peptide.

The protein belongs to the LptD family. In terms of assembly, component of the lipopolysaccharide transport and assembly complex. Interacts with LptE and LptA.

The protein localises to the cell outer membrane. Functionally, together with LptE, is involved in the assembly of lipopolysaccharide (LPS) at the surface of the outer membrane. This Aeromonas salmonicida (strain A449) protein is LPS-assembly protein LptD.